The sequence spans 82 residues: Small ribosomal subunit protein uS17 (82 aa).

The protein belongs to the universal ribosomal protein uS17 family. In terms of assembly, part of the 30S ribosomal subunit.

In terms of biological role, one of the primary rRNA binding proteins, it binds specifically to the 5'-end of 16S ribosomal RNA. This chain is Small ribosomal subunit protein uS17, found in Shewanella denitrificans (strain OS217 / ATCC BAA-1090 / DSM 15013).